We begin with the raw amino-acid sequence, 262 residues long: Flap endonuclease Xni (262 aa).

D112 lines the Mg(2+) pocket. The 88-residue stretch at 171–258 (QQLNDYWAIT…GFNLKDLRYT (88 aa)) folds into the 5'-3' exonuclease domain. I179, V190, and I193 together coordinate K(+). Positions 192–197 (GIGSKG) are interaction with DNA.

The protein belongs to the Xni family. It depends on Mg(2+) as a cofactor. K(+) serves as cofactor.

Functionally, has flap endonuclease activity. During DNA replication, flap endonucleases cleave the 5'-overhanging flap structure that is generated by displacement synthesis when DNA polymerase encounters the 5'-end of a downstream Okazaki fragment. The sequence is that of Flap endonuclease Xni from Psychromonas ingrahamii (strain DSM 17664 / CCUG 51855 / 37).